The primary structure comprises 89 residues: Small ribosomal subunit protein bS20 (89 aa).

Belongs to the bacterial ribosomal protein bS20 family.

Its function is as follows. Binds directly to 16S ribosomal RNA. The protein is Small ribosomal subunit protein bS20 of Helicobacter pylori (strain ATCC 700392 / 26695) (Campylobacter pylori).